We begin with the raw amino-acid sequence, 292 residues long: Protoheme IX farnesyltransferase (292 aa).

9 helical membrane-spanning segments follow: residues 13 to 33 (ILFG…QGHV), 35 to 55 (FLLL…GCVV), 84 to 104 (TALI…WFWV), 106 to 126 (PYSF…YSLW), 135 to 155 (TIIG…AVTH), 161 to 181 (ALLI…AIAI), 206 to 226 (VECL…YCFG), 231 to 251 (FFLL…IIGF), and 263 to 283 (LFLF…FTYQ).

Belongs to the UbiA prenyltransferase family. Protoheme IX farnesyltransferase subfamily.

It is found in the cell inner membrane. The enzyme catalyses heme b + (2E,6E)-farnesyl diphosphate + H2O = Fe(II)-heme o + diphosphate. Its pathway is porphyrin-containing compound metabolism; heme O biosynthesis; heme O from protoheme: step 1/1. Converts heme B (protoheme IX) to heme O by substitution of the vinyl group on carbon 2 of heme B porphyrin ring with a hydroxyethyl farnesyl side group. The polypeptide is Protoheme IX farnesyltransferase (Acinetobacter baylyi (strain ATCC 33305 / BD413 / ADP1)).